The chain runs to 274 residues: Putative ABC transporter ATP-binding protein alr3946 (274 aa).

Residues 6-242 (LTFEQVYYTY…REILDSIELG (237 aa)) form the ABC transporter domain. ATP is bound at residue 40-47 (GRNGCGKT).

The protein belongs to the ABC transporter superfamily.

It localises to the cell inner membrane. In terms of biological role, probably part of an ABC transporter complex. Responsible for energy coupling to the transport system. In Nostoc sp. (strain PCC 7120 / SAG 25.82 / UTEX 2576), this protein is Putative ABC transporter ATP-binding protein alr3946.